A 510-amino-acid chain; its full sequence is GMP synthase [glutamine-hydrolyzing] (510 aa).

The region spanning 5 to 195 (LVFIIDFGGQ…LFNICELKGD (191 aa)) is the Glutamine amidotransferase type-1 domain. Cysteine 82 acts as the Nucleophile in catalysis. Residues histidine 169 and glutamate 171 contribute to the active site. The 190-residue stretch at 196–385 (WSVTSFAEEK…LGIPHKLVWR (190 aa)) folds into the GMPS ATP-PPase domain. Residue 223–229 (SGGVDSS) coordinates ATP.

As to quaternary structure, homodimer.

The enzyme catalyses XMP + L-glutamine + ATP + H2O = GMP + L-glutamate + AMP + diphosphate + 2 H(+). It functions in the pathway purine metabolism; GMP biosynthesis; GMP from XMP (L-Gln route): step 1/1. Its function is as follows. Catalyzes the synthesis of GMP from XMP. This is GMP synthase [glutamine-hydrolyzing] from Clostridium tetani (strain Massachusetts / E88).